The sequence spans 160 residues: Cytochrome b6-f complex subunit 4 (160 aa).

A run of 3 helical transmembrane segments spans residues 36-56, 95-115, and 131-151; these read LLYI…GLAV, LLGV…PFLE, and TVFL…TLPI.

This sequence belongs to the cytochrome b family. PetD subfamily. In terms of assembly, the 4 large subunits of the cytochrome b6-f complex are cytochrome b6, subunit IV (17 kDa polypeptide, petD), cytochrome f and the Rieske protein, while the 4 small subunits are petG, petL, petM and petN. The complex functions as a dimer.

Its subcellular location is the plastid. The protein localises to the chloroplast thylakoid membrane. Component of the cytochrome b6-f complex, which mediates electron transfer between photosystem II (PSII) and photosystem I (PSI), cyclic electron flow around PSI, and state transitions. This Lotus japonicus (Lotus corniculatus var. japonicus) protein is Cytochrome b6-f complex subunit 4.